The primary structure comprises 717 residues: Polyribonucleotide nucleotidyltransferase (717 aa).

The Mg(2+) site is built by aspartate 488 and aspartate 494. The region spanning proline 555–isoleucine 614 is the KH domain. The region spanning glycine 624–lysine 692 is the S1 motif domain.

The protein belongs to the polyribonucleotide nucleotidyltransferase family. Requires Mg(2+) as cofactor.

The protein resides in the cytoplasm. The catalysed reaction is RNA(n+1) + phosphate = RNA(n) + a ribonucleoside 5'-diphosphate. Functionally, involved in mRNA degradation. Catalyzes the phosphorolysis of single-stranded polyribonucleotides processively in the 3'- to 5'-direction. In Rhizobium meliloti (strain 1021) (Ensifer meliloti), this protein is Polyribonucleotide nucleotidyltransferase.